The chain runs to 647 residues: Phosphomethylpyrimidine synthase (647 aa).

Substrate contacts are provided by residues Asn-235, Met-264, Tyr-293, His-329, 349–351, 390–393, and Glu-429; these read SRG and DGLR. Position 433 (His-433) interacts with Zn(2+). Substrate is bound at residue Tyr-456. Residue His-497 participates in Zn(2+) binding. Residues Cys-577, Cys-580, and Cys-585 each contribute to the [4Fe-4S] cluster site. The segment at 623–647 is disordered; it reads KSAEFKASGSELYHPAVSHEEVAEG.

The protein belongs to the ThiC family. Homodimer. [4Fe-4S] cluster is required as a cofactor.

It carries out the reaction 5-amino-1-(5-phospho-beta-D-ribosyl)imidazole + S-adenosyl-L-methionine = 4-amino-2-methyl-5-(phosphooxymethyl)pyrimidine + CO + 5'-deoxyadenosine + formate + L-methionine + 3 H(+). It functions in the pathway cofactor biosynthesis; thiamine diphosphate biosynthesis. Its function is as follows. Catalyzes the synthesis of the hydroxymethylpyrimidine phosphate (HMP-P) moiety of thiamine from aminoimidazole ribotide (AIR) in a radical S-adenosyl-L-methionine (SAM)-dependent reaction. The chain is Phosphomethylpyrimidine synthase from Vibrio vulnificus (strain CMCP6).